The following is a 306-amino-acid chain: MTDKIAVLLGGTSAEREVSLNSGAAVLAGLREGGIDAYPVDPKEVDVTQLKSMGFQKVFIALHGRGGEDGTLQGMLELMGLPYTGSGVMASALSMDKLRSKLLWQGAGLPVAPWVALTRAEFEKGLNDKQLAEISSLGLPVIVKPSREGSSVGMSKVVAENALQDALRLAFQHDEEVLIEKWLSGPEFTVAILGEEILPSIRIQPAGTFYDYEAKYLSDETQYFCPAGLEALQEANLQALVLKAWTTLGCKGWGRIDVMLDSDGQFYLLEANTSPGMTSHSLVPMAARQAGMSFSQLVVRILELAD.

Catalysis depends on residues Glu15 and Ser150. An ATP-grasp domain is found at 101-303 (KLLWQGAGLP…FSQLVVRILE (203 aa)). 134–189 (ISSLGLPVIVKPSREGSSVGMSKVVAENALQDALRLAFQHDEEVLIEKWLSGPEFT) contributes to the ATP binding site. Mg(2+) contacts are provided by Asp257, Glu270, and Asn272. Ser281 is a catalytic residue.

Belongs to the D-alanine--D-alanine ligase family. In terms of assembly, monomer. The cofactor is Mg(2+). It depends on Mn(2+) as a cofactor.

It localises to the cytoplasm. The enzyme catalyses 2 D-alanine + ATP = D-alanyl-D-alanine + ADP + phosphate + H(+). It participates in cell wall biogenesis; peptidoglycan biosynthesis. Functionally, cell wall formation. The protein is D-alanine--D-alanine ligase B of Escherichia coli O6:H1 (strain CFT073 / ATCC 700928 / UPEC).